The sequence spans 416 residues: Major royal jelly protein 8 (416 aa).

The N-terminal stretch at 1–16 (MIRWLLLMYLGITCQG) is a signal peptide. 8 N-linked (GlcNAc...) asparagine glycosylation sites follow: N24, N58, N93, N115, N158, N175, N196, and N215.

Belongs to the major royal jelly protein family. Expressed at very low levels in the hypopharyngeal glands of worker honey bees (at protein level). Secreted into bee venom in the sting apparatus (at protein level). Expressed in the spermatheca of adult queen bees (at protein level); expression levels are higher in mated queens than in virgin queens. Along with Mrjp9 expressed at very low levels in the head of worker bees compared to other major royal jelly proteins.

The protein localises to the secreted. Functionally, component of bee sting venom. Component of royal jelly, a substance produced in the hypopharyngeal gland containing proteins, free amino acids, fatty acids, sugars and other nutrients, which is fed to developing larvae by worker nurse bees; may be present only at trace levels. All larvae are fed some royal jelly (also known as worker jelly) early in their development but it forms the principal source of nutrition for larvae destined to become queen bees. Produced in the spermatheca of adult queen bees, along with other major royal jelly proteins, where it may act as a nutrient supply for sperm stored by mated queens, or be involved in energy metabolism. This Apis mellifera (Honeybee) protein is Major royal jelly protein 8.